A 150-amino-acid chain; its full sequence is Large ribosomal subunit protein uL13 (150 aa).

Residues 127–150 (KGTEHPHSAQKPQPLQLNPSATAK) are disordered. Polar residues predominate over residues 136–150 (QKPQPLQLNPSATAK).

Belongs to the universal ribosomal protein uL13 family. As to quaternary structure, part of the 50S ribosomal subunit.

In terms of biological role, this protein is one of the early assembly proteins of the 50S ribosomal subunit, although it is not seen to bind rRNA by itself. It is important during the early stages of 50S assembly. The polypeptide is Large ribosomal subunit protein uL13 (Synechococcus sp. (strain CC9902)).